Here is a 292-residue protein sequence, read N- to C-terminus: Protein LicB (292 aa).

EamA domains follow at residues 70-139 (ALSG…LLAI) and 160-286 (LGWS…VTLY).

In Haemophilus influenzae (strain ATCC 51907 / DSM 11121 / KW20 / Rd), this protein is Protein LicB (licB).